Reading from the N-terminus, the 212-residue chain is Putative DNA-binding protein At1g48610 (212 aa).

Residues 1–130 (MAKTALTPPA…GRPKKDDVAA (130 aa)) form a disordered region. The span at 27-44 (NKPQTDATGVSATDTASQ) shows a compositional bias: polar residues. 3 DNA-binding regions (a.T hook) span residues 45–56 (KRGRGRPPKAKS), 70–79 (TKPSGRPKRN), and 94–98 (KKRGR). Residues 57–72 (DSSQIGAVSAKASTKP) are compositionally biased toward polar residues. Residues 103-113 (TVTAAVVTTAT) are compositionally biased toward low complexity. The a.T hook 4 DNA-binding region spans 118–127 (RKRGRPKKDD). Positions 176–210 (DLKKRTALLQKKVKEAAAKLKQAVTAIDEVQKLAD) form a coiled coil.

The protein resides in the nucleus. May bind DNA. The polypeptide is Putative DNA-binding protein At1g48610 (Arabidopsis thaliana (Mouse-ear cress)).